The sequence spans 662 residues: DNA ligase (662 aa).

Residues 31-35 (DKDYD) and 79-80 (SL) each bind NAD(+). Lys121 (N6-AMP-lysine intermediate) is an active-site residue. Residues Arg143, Glu177, and Lys313 each coordinate NAD(+). Zn(2+) contacts are provided by Cys406, Cys409, Cys422, and Cys428. In terms of domain architecture, BRCT spans 586–662 (VLESPFMGKT…LSEEEFENMI (77 aa)).

This sequence belongs to the NAD-dependent DNA ligase family. LigA subfamily. Mg(2+) serves as cofactor. Mn(2+) is required as a cofactor.

The enzyme catalyses NAD(+) + (deoxyribonucleotide)n-3'-hydroxyl + 5'-phospho-(deoxyribonucleotide)m = (deoxyribonucleotide)n+m + AMP + beta-nicotinamide D-nucleotide.. Its function is as follows. DNA ligase that catalyzes the formation of phosphodiester linkages between 5'-phosphoryl and 3'-hydroxyl groups in double-stranded DNA using NAD as a coenzyme and as the energy source for the reaction. It is essential for DNA replication and repair of damaged DNA. This Clostridium perfringens (strain ATCC 13124 / DSM 756 / JCM 1290 / NCIMB 6125 / NCTC 8237 / Type A) protein is DNA ligase.